We begin with the raw amino-acid sequence, 802 residues long: Potassium channel AKT2/3 (802 aa).

At 1–79 (MDLKYSASHC…PMDSRYRCWE (79 aa)) the chain is on the cytoplasmic side. A helical transmembrane segment spans residues 80–100 (FYMVLLVAYSAWVYPFEVAFL). At 101-109 (NSSPKRNLC) the chain is on the extracellular side. A helical membrane pass occupies residues 110–130 (IADNIVDLFFAVDIVLTFFVA). The Cytoplasmic portion of the chain corresponds to 131–153 (YIDERTQLLVREPKQIAVRYLST). The chain crosses the membrane as a helical span at residues 154 to 174 (WFLMDVASTIPFDAIGYLITG). At 175–183 (TSTLNITCN) the chain is on the extracellular side. A glycan (N-linked (GlcNAc...) asparagine) is linked at asparagine 179. The helical; Voltage-sensor transmembrane segment at 184-204 (LLGLLRFWRLRRVKHLFTRLE) threads the bilayer. The Cytoplasmic segment spans residues 205–218 (KDIRYSYFWIRCFR). The helical transmembrane segment at 219 to 239 (LLSVTLFLVHCAGCSYYLIAD) threads the bilayer. Residues 240 to 265 (RYPHQGKTWTDAIPNFTETSLSIRYI) are Extracellular-facing. N-linked (GlcNAc...) asparagine glycosylation is present at asparagine 254. An intramembrane region (pore-forming) is located at residues 266 to 285 (AAIYWSITTMTTVGYGDLHA). Residues 286-288 (SNT) are Extracellular-facing. Residues 289–309 (IEMVFITVYMLFNLGLTAYLI) form a helical membrane-spanning segment. Residues 310-802 (GNMTNLVVEG…KLYFVVNKII (493 aa)) lie on the Cytoplasmic side of the membrane. 394 to 513 (LFKGVSREIL…ATMLKNFLQH (120 aa)) contributes to the a nucleoside 3',5'-cyclic phosphate binding site. ANK repeat units lie at residues 540–569 (NIAS…SPDI), 573–602 (KGKT…NIHI), 606–636 (NGNS…SDPH), 637–666 (IAGD…NVDT), and 670–699 (HGVT…DVVC). One can recognise a KHA domain in the interval 725-802 (RVSIYRGHPL…KLYFVVNKII (78 aa)).

Belongs to the potassium channel family. Plant (TC 1.A.1.4) subfamily. As to quaternary structure, the potassium channel is probably composed of a homo- or heterotetrameric complex of pore-forming subunits. Interacts with the phosphatase PPC2A and the kinase CIPK6. May interact with AKT1, KAT1 and KAT3. Interacts with SLAC1. Post-translationally, dephosphorylated by PP2CA. As to expression, expressed mainly in the phloem tissues throughout the plant but also, at a lower level, in leaf epiderm, mesophyll and guard cells.

The protein localises to the endoplasmic reticulum membrane. In terms of biological role, highly selective and weak inward-rectifying potassium channel. Plays a role in both loading and unloading potassium into/from the phloem sap. Seems to control sugar loading into phloem via a voltage-dependent process. Blocked by physiological concentrations of external calcium and by external acidification. May interact with the cytoskeleton or with regulatory proteins. Dephosphorylation by PP2CA not only leads to the inhibition of potassium currents but also to an increase of the voltage-dependence of the channel. Regulated by the CBL4/CIPK6 calcium sensor/protein kinase complex via a kinase interaction-dependent but phosphorylation-independent translocation of the channel to the plasma membrane. The sequence is that of Potassium channel AKT2/3 (AKT2) from Arabidopsis thaliana (Mouse-ear cress).